We begin with the raw amino-acid sequence, 144 residues long: Interferon-induced transmembrane protein 2 (144 aa).

Met1 bears the N-acetylmethionine mark. The Cytoplasmic segment spans residues 1–56; that stretch reads MSHNSQAFLSTNAGLPPSYETIKEEYGVTELGEPSNSAVVRTTVINMPREVSVPDH. Phosphotyrosine is present on Tyr19. Residues 57-77 constitute an intramembrane region (helical); that stretch reads VVWSLFNTLFFNACCLGFVAY. 3 S-palmitoyl cysteine lipidation sites follow: Cys70, Cys71, and Cys104. Residues 78–110 lie on the Cytoplasmic side of the membrane; the sequence is AYSVKSRDRKMVGDVVGAQAYASTAKCLNISSL. The chain crosses the membrane as a helical span at residues 111–131; that stretch reads IFSILMVIICIIIFSTTSVVV. The Extracellular portion of the chain corresponds to 132 to 144; that stretch reads FQSFAQRTPHSGF.

The protein belongs to the CD225/Dispanin family. In terms of assembly, interacts with CD81. In terms of processing, palmitoylation on membrane-proximal cysteines controls clustering in membrane compartments and antiviral activity. Phosphorylation at Tyr-19 is required for endosomal and lysosomal location. Predominantly expressed in nascent primordial germ cells, as well as in gonadal germ cells.

The protein resides in the cell membrane. It localises to the lysosome membrane. Its subcellular location is the late endosome membrane. IFN-induced antiviral protein which inhibits the entry of viruses to the host cell cytoplasm, permitting endocytosis, but preventing subsequent viral fusion and release of viral contents into the cytosol. Active against multiple viruses, including influenza A virus, SARS coronavirus (SARS-CoV), Marburg virus (MARV) and Ebola virus (EBOV), Dengue virus (DNV) and West Nile virus (WNV). Can inhibit: influenza virus hemagglutinin protein-mediated viral entry, MARV and EBOV GP1,2-mediated viral entry and SARS-CoV S protein-mediated viral entry. Induces cell cycle arrest and mediates apoptosis by caspase activation and in p53-independent manner. The polypeptide is Interferon-induced transmembrane protein 2 (Ifitm2) (Mus musculus (Mouse)).